We begin with the raw amino-acid sequence, 465 residues long: Cysteine--tRNA ligase (465 aa).

C29 is a binding site for Zn(2+). The 'HIGH' region signature appears at 31–41 (PTVYNYIHIGN). Positions 209, 234, and 238 each coordinate Zn(2+). The 'KMSKS' region signature appears at 266 to 270 (KMSKS). K269 is an ATP binding site. At S270 the chain carries Phosphoserine.

This sequence belongs to the class-I aminoacyl-tRNA synthetase family. In terms of assembly, monomer. Zn(2+) is required as a cofactor.

It localises to the cytoplasm. It carries out the reaction tRNA(Cys) + L-cysteine + ATP = L-cysteinyl-tRNA(Cys) + AMP + diphosphate. The sequence is that of Cysteine--tRNA ligase from Bacillus anthracis (strain A0248).